A 552-amino-acid chain; its full sequence is MQSFLVAEIQNALRSASVTTGQSIIIEKPTSPKFGDYATNIAFLAAKELKRNPRQLAEELTGHFRFPEGTVTKTEVAGPGFINFFMEPAFIMQSAERVFREGAEYGKGREGQGKTAIVEYVSANPTGPLTIGRGRGGVLGDCIANLAEAQGYHVNREYYFNDAGRQMQILGESVRYRYMELCGRTIDFPDTHYKGGYIGEIAEKIHSEHGEDLLHVESIEPFRSEAESIIFSSIQKTLGRLGIVHDSFFNEHTLYTADLNGISPNQNVIDRLREKGFIGEYDGATWFLTTKLGQEKDKVLIKSSGEPSYRLPDIAYHVTKYARGFDMIINVFGADHIDEYPDVLEALKILGHDTAHVRIAINQFVTTTVNGETVKMSTRKGNADLLDDLIDDVGPDATRLFFIMRSKDSHLNFDVELAKKQSKDNPVFYLQYAHARICSLLRLAWSEIGFDAAKRPEPGVLMRLTTPEELQLAFGILDFGEASRSAFRMLEPQKMVDYMHSIAELFHRFYQECPILKAEPEIAEARLFLAVAVRQVLQNGFRILGISAPESM.

The 'HIGH' region motif lies at 123–133 (ANPTGPLTIGR).

It belongs to the class-I aminoacyl-tRNA synthetase family. As to quaternary structure, monomer.

It localises to the cytoplasm. The catalysed reaction is tRNA(Arg) + L-arginine + ATP = L-arginyl-tRNA(Arg) + AMP + diphosphate. This is Arginine--tRNA ligase from Chlorobium luteolum (strain DSM 273 / BCRC 81028 / 2530) (Pelodictyon luteolum).